Here is a 471-residue protein sequence, read N- to C-terminus: D-hydantoinase (471 aa).

The Zn(2+) site is built by His-58, His-60, and Lys-150. Lys-150 is subject to N6-carboxylysine. Tyr-155 is a binding site for substrate. Positions 183 and 239 each coordinate Zn(2+). Ser-288 is a binding site for substrate. Asp-315 lines the Zn(2+) pocket. Asn-337 contributes to the substrate binding site.

Belongs to the metallo-dependent hydrolases superfamily. Hydantoinase/dihydropyrimidinase family. As to quaternary structure, homotetramer. The cofactor is Zn(2+). Ni(2+) serves as cofactor. Requires Co(2+) as cofactor. It depends on Mn(2+) as a cofactor. Carboxylation allows a single lysine to coordinate two zinc ions.

With respect to regulation, completely inhibited by p-chloromercuribenzoate and partially inhibited by metal chelating agents. Functionally, catalyzes the stereospecific hydrolysis of the cyclic amide bond of D-hydantoin. Has no activity on dihydropyrimidines. The sequence is that of D-hydantoinase from Geobacillus stearothermophilus (Bacillus stearothermophilus).